The primary structure comprises 111 residues: PCNA-associated factor (111 aa).

A Phosphoserine modification is found at Ser-8. Lys-15 participates in a covalent cross-link: Glycyl lysine isopeptide (Lys-Gly) (interchain with G-Cter in ubiquitin). Positions 23–34 (RKVLGSSTSATN) match the D-box motif. A disordered region spans residues 23–111 (RKVLGSSTSA…QPDHTNDEKE (89 aa)). Lys-24 is subject to N6-acetyllysine; alternate. Residue Lys-24 forms a Glycyl lysine isopeptide (Lys-Gly) (interchain with G-Cter in ubiquitin); alternate linkage. A phosphoserine mark is found at Ser-28, Ser-31, and Ser-72. Residues 28-40 (SSTSATNSTSVSS) show a composition bias toward low complexity. The PIP-box signature appears at 62-72 (QKGIGEFFRLS). A compositionally biased stretch (basic and acidic residues) spans 72-81 (SPKDSEKENQ). The short motif at 78-80 (KEN) is the KEN box element. The Initiation motif motif lies at 85–97 (EAGSSGLGKAKRK).

In terms of assembly, interacts (when monoubiquitinated at Lys-15 and Lys-24) with PCNA. Interacts with isoform 2/p33ING1b of ING1. Interacts with BRCA1. Post-translationally, monoubiquitinated at Lys-15 and Lys-24 during normal S phase, promoting its association with PCNA. Also diubiquitinated at these 2 sites. Following DNA damage, monoubiquitin chains at Lys-15 and Lys-24 are probably extended, leading to disrupt the interaction with PCNA. Polyubiquitinated by the APC/C complex at the mitotic exit, leading to its degradation by the proteasome. In terms of tissue distribution, expressed predominantly in liver, pancreas and placenta. Not detected in heart or brain. Highly expressed in a number of tumors, especially esophageal tumors, in anaplastic thyroid carcinomas, adrenocortical carcinomas, and in non-small-cell lung cancer lines.

The protein localises to the nucleus. The protein resides in the cytoplasm. It is found in the perinuclear region. Functionally, PCNA-binding protein that acts as a regulator of DNA repair during DNA replication. Following DNA damage, the interaction with PCNA is disrupted, facilitating the interaction between monoubiquitinated PCNA and the translesion DNA synthesis DNA polymerase eta (POLH) at stalled replisomes, facilitating the bypass of replication-fork-blocking lesions. Also acts as a regulator of centrosome number. The sequence is that of PCNA-associated factor from Homo sapiens (Human).